A 156-amino-acid chain; its full sequence is Dihydrofolate reductase (156 aa).

The 156-residue stretch at 1-156 (MLKLIWCQTL…VNYYSNKKEK (156 aa)) folds into the DHFR domain.

Belongs to the dihydrofolate reductase family.

It carries out the reaction (6S)-5,6,7,8-tetrahydrofolate + NADP(+) = 7,8-dihydrofolate + NADPH + H(+). Its pathway is cofactor biosynthesis; tetrahydrofolate biosynthesis; 5,6,7,8-tetrahydrofolate from 7,8-dihydrofolate: step 1/1. Functionally, key enzyme in folate metabolism. Catalyzes an essential reaction for de novo glycine and purine synthesis, and for DNA precursor synthesis. The polypeptide is Dihydrofolate reductase (folA) (Ureaplasma parvum serovar 3 (strain ATCC 700970)).